We begin with the raw amino-acid sequence, 357 residues long: UDP-xylose transporter 3 (357 aa).

10 helical membrane passes run 7 to 27 (FQLG…SIVI), 31 to 51 (ALIS…HLLV), 75 to 95 (VMGF…SLGF), 100 to 120 (FYQM…TLFF), 132 to 152 (LTIL…LNML), 154 to 174 (SVLS…TNTI), 194 to 214 (AITL…QNVF), 224 to 244 (FFIV…FLVI), 250 to 270 (VTYQ…GYVL), and 280 to 300 (ILGI…CSIE). Ser-334 bears the Phosphoserine mark.

Belongs to the TPT transporter family. TPT (TC 2.A.7.9) subfamily. In terms of tissue distribution, ubiquitous.

The protein localises to the golgi apparatus membrane. In terms of biological role, nucleotide-sugar transporter that transports UDP-xylose and UMP in a strict counter-exchange mode. This Arabidopsis thaliana (Mouse-ear cress) protein is UDP-xylose transporter 3.